A 294-amino-acid polypeptide reads, in one-letter code: N-acetylmuramic acid 6-phosphate etherase (294 aa).

Positions 54 to 217 (VIKSFEEEGR…STASMIGVGK (164 aa)) constitute an SIS domain. E82 (proton donor) is an active-site residue. Residue E113 is part of the active site.

Belongs to the GCKR-like family. MurNAc-6-P etherase subfamily. Homodimer.

The enzyme catalyses N-acetyl-D-muramate 6-phosphate + H2O = N-acetyl-D-glucosamine 6-phosphate + (R)-lactate. The protein operates within amino-sugar metabolism; N-acetylmuramate degradation. Functionally, specifically catalyzes the cleavage of the D-lactyl ether substituent of MurNAc 6-phosphate, producing GlcNAc 6-phosphate and D-lactate. In Bacillus cereus (strain ATCC 10987 / NRS 248), this protein is N-acetylmuramic acid 6-phosphate etherase.